Consider the following 217-residue polypeptide: Adenylate kinase (217 aa).

10–15 serves as a coordination point for ATP; the sequence is GAGKGT. Residues 30–59 are NMP; that stretch reads STGDMFRAAIKEGTELGLQAKSFMDQGALV. Residues T31, R36, 57 to 59, 85 to 88, and Q92 each bind AMP; these read ALV and GFPR. Residues 126–163 are LID; the sequence is GRRICKTCGASYHLIFNPPAEEGKCDKDGGELYTRADD. R127 serves as a coordination point for ATP. C130 and C133 together coordinate Zn(2+). Residue 136–137 coordinates ATP; sequence SY. Zn(2+) contacts are provided by C150 and D153. Residues R160 and R171 each contribute to the AMP site. Q199 provides a ligand contact to ATP.

The protein belongs to the adenylate kinase family. In terms of assembly, monomer.

The protein localises to the cytoplasm. It catalyses the reaction AMP + ATP = 2 ADP. The protein operates within purine metabolism; AMP biosynthesis via salvage pathway; AMP from ADP: step 1/1. Functionally, catalyzes the reversible transfer of the terminal phosphate group between ATP and AMP. Plays an important role in cellular energy homeostasis and in adenine nucleotide metabolism. In Lysinibacillus sphaericus (strain C3-41), this protein is Adenylate kinase.